A 157-amino-acid polypeptide reads, in one-letter code: Small ribosomal subunit protein uS7 (157 aa).

The protein belongs to the universal ribosomal protein uS7 family. As to quaternary structure, part of the 30S ribosomal subunit. Contacts proteins S9 and S11.

Its function is as follows. One of the primary rRNA binding proteins, it binds directly to 16S rRNA where it nucleates assembly of the head domain of the 30S subunit. Is located at the subunit interface close to the decoding center, probably blocks exit of the E-site tRNA. This chain is Small ribosomal subunit protein uS7, found in Polaromonas naphthalenivorans (strain CJ2).